A 249-amino-acid chain; its full sequence is GTP cyclohydrolase 1 type 2 homolog (249 aa).

A divalent metal cation-binding residues include His64, His65, Asp102, His217, and Glu221.

The protein belongs to the GTP cyclohydrolase I type 2/NIF3 family. Homohexamer.

The protein is GTP cyclohydrolase 1 type 2 homolog of Neisseria meningitidis serogroup B (strain ATCC BAA-335 / MC58).